The chain runs to 438 residues: Trigger factor (438 aa).

Positions 163 to 248 constitute a PPIase FKBP-type domain; the sequence is GDTAIIDFAG…VKEIKRKEIA (86 aa).

Belongs to the FKBP-type PPIase family. Tig subfamily.

The protein localises to the cytoplasm. It catalyses the reaction [protein]-peptidylproline (omega=180) = [protein]-peptidylproline (omega=0). In terms of biological role, involved in protein export. Acts as a chaperone by maintaining the newly synthesized protein in an open conformation. Functions as a peptidyl-prolyl cis-trans isomerase. The sequence is that of Trigger factor from Pelotomaculum thermopropionicum (strain DSM 13744 / JCM 10971 / SI).